The sequence spans 237 residues: UDP-Gal:alpha-D-GlcNAc-diphosphoundecaprenol beta-1,4-galactosyltransferase (237 aa).

Residue E101 is the Nucleophile of the active site.

It belongs to the glycosyltransferase 26 family. Mn(2+) serves as cofactor. It depends on Ni(2+) as a cofactor. Pb(2+) is required as a cofactor.

The catalysed reaction is N-acetyl-alpha-D-glucosaminyl-di-trans,octa-cis-undecaprenyl diphosphate + UDP-alpha-D-galactose = beta-D-Gal-(1-&gt;4)-alpha-D-GlcNAc-di-trans,octa-cis-undecaprenyl diphosphate + UDP + H(+). The protein operates within bacterial outer membrane biogenesis; LPS O-antigen biosynthesis. Functionally, galactosyltransferase that adds one galactose residue in the beta-1-4 linkage to GlcNAc-alpha-pyrophosphate-lipid in the biosynthesis of the O-polysaccharide repeating unit of the O antigen. The sequence is that of UDP-Gal:alpha-D-GlcNAc-diphosphoundecaprenol beta-1,4-galactosyltransferase (wfeD) from Shigella boydii.